The sequence spans 1071 residues: SLIT-ROBO Rho GTPase-activating protein 2 (1071 aa).

An F-BAR domain is found at 22-325 (KEIRAQLTEQ…AVENLDATSD (304 aa)). Basic and acidic residues predominate over residues 181–203 (LKEAEKQEEKQIGKSVKQEDRQT). Residues 181–211 (LKEAEKQEEKQIGKSVKQEDRQTPRSPDSTA) are disordered. Serine 206 carries the post-translational modification Phosphoserine. Residues 362-401 (VQSELVQRCQQLQSRLSTLKIENEEVKKTMEATLQTIQDI) adopt a coiled-coil conformation. Phosphoserine occurs at positions 427, 500, 691, and 695. The region spanning 489–679 (ARRSSTVRKQ…TIIIQHENIF (191 aa)) is the Rho-GAP domain. The disordered stretch occupies residues 698–726 (DYCDSPHGETTSVEDSTQDVTAEHHTSDD). Positions 705–717 (GETTSVEDSTQDV) are enriched in polar residues. Residue serine 724 is modified to Phosphoserine. The region spanning 728–787 (CEPIEAIAKFDYVGRTARELSFKKGASLLLYQRASDDWWEGRHNGIDGLIPHQYIVVQDT) is the SH3 domain. Serine 795 bears the Phosphoserine mark. Residues 837–936 (QRKRPESGSI…RSKSFNNHRP (100 aa)) are disordered. Residues 855–866 (HGLSSSLTDSSS) are compositionally biased toward low complexity. 2 stretches are compositionally biased toward polar residues: residues 874-885 (RPSSQPIMSQSL) and 897-907 (GHGSLNSISRH). Serine 916 is modified (phosphoserine). Over residues 919 to 933 (IRKTATAGRSKSFNN) the composition is skewed to polar residues. Arginine 927 bears the Symmetric dimethylarginine; by PRMT5 mark. Serine 930 is subject to Phosphoserine. Positions 940 to 967 (EVIAQDIEATMNSALNELRELERQSSVK) form a coiled coil. Positions 983 to 1012 (SPVVAPTSEPSSPLHTQLLKDPEPAFQRSA) are disordered. A phosphoserine mark is found at serine 990, serine 994, serine 1013, and serine 1027. The segment at 1029–1071 (KMAAPVKPPATRPKPTVFPKTNATSPGVNSSTSPQSTDKSCTV) is disordered. Residues 1047–1071 (PKTNATSPGVNSSTSPQSTDKSCTV) are compositionally biased toward polar residues.

In terms of assembly, homodimer. Heterodimer; forms a heterodimer with SRGAP2C, altering SRGAP2 function. Forms a heterooligomer with SRGAP1 and SRGAP3 through its F-BAR domain. Interacts (via SH3 domain) with GPHN. Interacts (via SH3 domain) with FMNL1 (activated by RAC1); regulates the actin filament severing activity of FMNL1 and actin dynamics. Interacts (via SH3 domain) with FMNL3. Interacts with RAC1; specifically stimulates RAC1 GTPase activity. Interacts (via F-BAR domain) with HOMER1. Interacts with ROBO1 and ROBO2. Interacts with FASLG. Interacts with PRMT5. Post-translationally, methylation at Arg-927 is required for the stimulation of cell migration, dimerization and localization at the plasma membrane protrusions.

It is found in the cell membrane. The protein localises to the cell projection. Its subcellular location is the dendritic spine. It localises to the postsynaptic density. The protein resides in the postsynaptic cell membrane. It is found in the lamellipodium. The protein localises to the cytoplasmic vesicle. Its subcellular location is the phagosome. It localises to the nucleus. The protein resides in the cytoplasm. It is found in the cytosol. With respect to regulation, activity is strongly inhibited by SRGAP2C, which heterodimerize with SRGAP2/SRGAP2A, thereby reducing SRGAP2/SRGAP2A levels through proteasome-dependent degradation. Postsynaptic RAC1 GTPase activating protein (GAP) that plays a key role in neuronal morphogenesis and migration mainly during development of the cerebral cortex. Regulates excitatory and inhibitory synapse maturation and density in cortical pyramidal neurons. SRGAP2/SRGAP2A limits excitatory and inhibitory synapse density through its RAC1-specific GTPase activating activity, while it promotes maturation of both excitatory and inhibitory synapses through its ability to bind to the postsynaptic scaffolding protein HOMER1 at excitatory synapses, and the postsynaptic protein GPHN at inhibitory synapses. Mechanistically, acts by binding and deforming membranes, thereby regulating actin dynamics to regulate cell migration and differentiation. Promotes cell repulsion and contact inhibition of locomotion: localizes to protrusions with curved edges and controls the duration of RAC1 activity in contact protrusions. In non-neuronal cells, may also play a role in cell migration by regulating the formation of lamellipodia and filopodia. The polypeptide is SLIT-ROBO Rho GTPase-activating protein 2 (Homo sapiens (Human)).